The primary structure comprises 635 residues: 4-hydroxy-3-methylbut-2-enyl diphosphate reductase (635 aa).

The 4-hydroxy-3-methylbut-2-enyl diphosphate reductase stretch occupies residues 1–279 (MSIILAKKSG…KEAIFKMSNK (279 aa)). Cysteine 12 provides a ligand contact to [4Fe-4S] cluster. Residues histidine 42 and histidine 77 each coordinate (2E)-4-hydroxy-3-methylbut-2-enyl diphosphate. Histidine 42 and histidine 77 together coordinate dimethylallyl diphosphate. 2 residues coordinate isopentenyl diphosphate: histidine 42 and histidine 77. [4Fe-4S] cluster is bound at residue cysteine 99. Histidine 127 is a binding site for (2E)-4-hydroxy-3-methylbut-2-enyl diphosphate. Histidine 127 lines the dimethylallyl diphosphate pocket. Histidine 127 serves as a coordination point for isopentenyl diphosphate. Catalysis depends on glutamate 129, which acts as the Proton donor. (2E)-4-hydroxy-3-methylbut-2-enyl diphosphate is bound at residue threonine 163. Cysteine 191 contributes to the [4Fe-4S] cluster binding site. (2E)-4-hydroxy-3-methylbut-2-enyl diphosphate is bound by residues serine 219, serine 220, asparagine 221, and serine 263. Residues serine 219, serine 220, asparagine 221, and serine 263 each coordinate dimethylallyl diphosphate. Residues serine 219, serine 220, asparagine 221, and serine 263 each coordinate isopentenyl diphosphate. S1 motif domains follow at residues 298-373 (GQEV…LNRE), 380-455 (KEAF…ASRR), 476-544 (DTIK…LSIK), and 561-630 (GNIV…LSIK).

In the N-terminal section; belongs to the IspH family. The cofactor is [4Fe-4S] cluster.

It carries out the reaction isopentenyl diphosphate + 2 oxidized [2Fe-2S]-[ferredoxin] + H2O = (2E)-4-hydroxy-3-methylbut-2-enyl diphosphate + 2 reduced [2Fe-2S]-[ferredoxin] + 2 H(+). The enzyme catalyses dimethylallyl diphosphate + 2 oxidized [2Fe-2S]-[ferredoxin] + H2O = (2E)-4-hydroxy-3-methylbut-2-enyl diphosphate + 2 reduced [2Fe-2S]-[ferredoxin] + 2 H(+). It participates in isoprenoid biosynthesis; dimethylallyl diphosphate biosynthesis; dimethylallyl diphosphate from (2E)-4-hydroxy-3-methylbutenyl diphosphate: step 1/1. It functions in the pathway isoprenoid biosynthesis; isopentenyl diphosphate biosynthesis via DXP pathway; isopentenyl diphosphate from 1-deoxy-D-xylulose 5-phosphate: step 6/6. In terms of biological role, catalyzes the conversion of 1-hydroxy-2-methyl-2-(E)-butenyl 4-diphosphate (HMBPP) into a mixture of isopentenyl diphosphate (IPP) and dimethylallyl diphosphate (DMAPP). Acts in the terminal step of the DOXP/MEP pathway for isoprenoid precursor biosynthesis. In Clostridium tetani (strain Massachusetts / E88), this protein is 4-hydroxy-3-methylbut-2-enyl diphosphate reductase.